The following is a 1030-amino-acid chain: Subtilin biosynthesis protein SpaB (1030 aa).

The protein to S.epidermidis EpiB and L.lactis NisB.

The protein resides in the cell membrane. Functionally, involved in the post-translational modification of the lantibiotic subtilin. The chain is Subtilin biosynthesis protein SpaB (spaB) from Bacillus subtilis.